Reading from the N-terminus, the 211-residue chain is uncharacterized protein (211 aa).

Transmembrane regions (helical) follow at residues 77 to 97 (FLMFHLFCNSALFAVGIAITI), 113 to 133 (GISVSVWLILAAYMIYWVLIG), 152 to 172 (ILISMVPNVIFMLVFLFNVIP), and 179 to 199 (LLTPWFVGTCAFATLLFPLFG).

The protein resides in the cell membrane. This is an uncharacterized protein from Bacillus subtilis (strain 168).